We begin with the raw amino-acid sequence, 538 residues long: Beta-1,4-mannosyl-glycoprotein 4-beta-N-acetylglucosaminyltransferase (538 aa).

Residues 1-7 (MKMRRYK) lie on the Cytoplasmic side of the membrane. Residues 8 to 23 (LFLMFCMAGLCLISFL) form a helical; Signal-anchor for type II membrane protein membrane-spanning segment. Residues 24 to 538 (HFFKTLSYVT…VRGKLDTTEG (515 aa)) lie on the Lumenal side of the membrane. The interval 121-151 (GTRMLEKPSPGRTEEKTKVAEGSSVRGPARR) is disordered. N-linked (GlcNAc...) asparagine glycans are attached at residues Asn245, Asn263, and Asn401. A disordered region spans residues 509–538 (PKSTVEGGRRNQGSDGRSSAVRGKLDTTEG).

This sequence belongs to the glycosyltransferase 17 family. As to quaternary structure, interacts with MGAT4D.

It localises to the golgi apparatus membrane. The enzyme catalyses N(4)-{beta-D-GlcNAc-(1-&gt;2)-alpha-D-Man-(1-&gt;3)-[beta-D-GlcNAc-(1-&gt;2)-alpha-D-Man-(1-&gt;6)]-beta-D-Man-(1-&gt;4)-beta-D-GlcNAc-(1-&gt;4)-beta-D-GlcNAc}-L-asparaginyl-[protein] + UDP-N-acetyl-alpha-D-glucosamine = N(4)-{beta-D-GlcNAc-(1-&gt;2)-alpha-D-Man-(1-&gt;3)-[beta-D-GlcNAc-(1-&gt;4)]-[beta-D-GlcNAc-(1-&gt;2)-alpha-D-Man-(1-&gt;6)]-beta-D-Man-(1-&gt;4)-beta-D-GlcNAc-(1-&gt;4)-beta-D-GlcNAc}-L-asparaginyl-[protein] + UDP + H(+). It functions in the pathway protein modification; protein glycosylation. In terms of biological role, it is involved in the regulation of the biosynthesis and biological function of glycoprotein oligosaccharides. Catalyzes the addition of N-acetylglucosamine in beta 1-4 linkage to the beta-linked mannose of the trimannosyl core of N-linked sugar chains, called bisecting N-acetylglucosamine (GlcNAc). It is one of the most important enzymes involved in the regulation of the biosynthesis of glycoprotein oligosaccharides. The addition of this bisecting GlcNAc residue alters not only the composition, but also the conformation of the N-glycan. The introduction of the bisecting GlcNAc residue results in the suppression of further processing and elongation of N-glycans, precluding the formation of beta-1,6 GlcNAc branching, catalyzed by MGAT5 since it is unable to use the bisected oligosaccharide as a substrate. Addition of bisecting N-acetylglucosamine to CDH1/E-cadherin modulates CDH1 cell membrane location. Inhibits NeuAc-alpha-2,3-Gal-beta-1,4-GlcNAc- formation which modulates sialylation levels and plays a role in cell migration regulation. In brain, addition of bisecting N-acetylglucosamine to BACE1 blocks its lysosomal targeting in response to oxidative stress and further degradation which increases its location to early endosome and the APP cleavage. In Rattus norvegicus (Rat), this protein is Beta-1,4-mannosyl-glycoprotein 4-beta-N-acetylglucosaminyltransferase (Mgat3).